Reading from the N-terminus, the 255-residue chain is 4-hydroxy-tetrahydrodipicolinate reductase (255 aa).

Residues 9–14 (GFKGKM), 89–91 (GTT), and 115–118 (APNF) each bind NAD(+). The active-site Proton donor/acceptor is His145. His146 contacts (S)-2,3,4,5-tetrahydrodipicolinate. The active-site Proton donor is Lys149. 155–156 (GT) lines the (S)-2,3,4,5-tetrahydrodipicolinate pocket.

Belongs to the DapB family.

The protein resides in the cytoplasm. The enzyme catalyses (S)-2,3,4,5-tetrahydrodipicolinate + NAD(+) + H2O = (2S,4S)-4-hydroxy-2,3,4,5-tetrahydrodipicolinate + NADH + H(+). It catalyses the reaction (S)-2,3,4,5-tetrahydrodipicolinate + NADP(+) + H2O = (2S,4S)-4-hydroxy-2,3,4,5-tetrahydrodipicolinate + NADPH + H(+). Its pathway is amino-acid biosynthesis; L-lysine biosynthesis via DAP pathway; (S)-tetrahydrodipicolinate from L-aspartate: step 4/4. Catalyzes the conversion of 4-hydroxy-tetrahydrodipicolinate (HTPA) to tetrahydrodipicolinate. This chain is 4-hydroxy-tetrahydrodipicolinate reductase, found in Streptococcus gordonii (strain Challis / ATCC 35105 / BCRC 15272 / CH1 / DL1 / V288).